Reading from the N-terminus, the 609-residue chain is Kelch domain-containing protein 10 homolog (609 aa).

The interval 103–146 is disordered; sequence ASDLDEEEEEEDDDVDVDVDYGDTDSESEFEEMYSDEWTSSSDE. The span at 104 to 137 shows a compositional bias: acidic residues; the sequence is SDLDEEEEEEDDDVDVDVDYGDTDSESEFEEMYS. Kelch repeat units follow at residues 214–277, 279–334, 335–381, 389–437, 458–508, and 510–554; these read HLYS…IHNN, LISH…IHKH, FLYT…RYRH, HIFV…GNRG, EAFI…HSDN, and CMYV…YNDN. A disordered region spans residues 576–609; that stretch reads LPPQRRRRLDTSQPDPSMLISLYSNPKRARSSTQ.

In terms of assembly, interacts with Elongin-C; may be the substrate recognition component of an E3 ubiquitin ligase complex.

In terms of biological role, activates the Pk92B/DASK1-MAPK signaling cascade. This Drosophila melanogaster (Fruit fly) protein is Kelch domain-containing protein 10 homolog (slim).